Here is a 421-residue protein sequence, read N- to C-terminus: MLKAVILIGGPQKGTRFRPLSFEVPKPLFPVAGVPMVQHHIEACSKVPNLKEILLIGFYQPNEALNSFLLKAQQEFKVAIRYLQEYSALGTGGGIYHFRDQILSGGPQAFFVMNADVCSEFPLVSMLDFHKQHGGSQSYVILGTTANRTQSLNYGCIVANRDTQEVLHYVEKPGTFVSDIINCGIYLFSPSIFQHIAEVFQQNQQELQLEENSSWQRMEVIRLEQDVFSTLAGRGKLYVYKTEGCWSQIKSAGSAIYASRLYLSQYGTTHPERLASTKEGGPTIRGNVYIHPTANVDPSAVLGPNVSIGMGVTVAAGVRIRESIILHGAVLQDHSCVLNTIVGWDSMVGRWARVEGTPSDPNPNDPYSKIDSETLFRDGKLTPSITILGCNVSIPAEVVILNSIVLPHKELSRSFKNQIIL.

This sequence belongs to the transferase hexapeptide repeat family.

The catalysed reaction is alpha-D-mannose 1-phosphate + GTP + H(+) = GDP-alpha-D-mannose + diphosphate. It participates in nucleotide-sugar biosynthesis; GDP-alpha-D-mannose biosynthesis; GDP-alpha-D-mannose from alpha-D-mannose 1-phosphate (GTP route): step 1/1. The polypeptide is Mannose-1-phosphate guanyltransferase alpha-A (gmppa-a) (Xenopus laevis (African clawed frog)).